The following is a 412-amino-acid chain: Branched-chain alpha-ketoacid dehydrogenase kinase (412 aa).

The N-terminal 30 residues, 1-30, are a transit peptide targeting the mitochondrion; it reads MILTSVLGSGPRSWSSLWPLLGSSLSLRAR. The residue at position 31 (serine 31) is a Phosphoserine. Serine 52 bears the Phosphoserine; by autocatalysis mark. Residues 159-404 enclose the Histidine kinase domain; that stretch reads LDDHKDVVTL…DVYLRLRHID (246 aa). Lysine 192 and lysine 233 each carry N6-acetyllysine. Positions 279 and 315 each coordinate ATP. A Mg(2+)-binding site is contributed by asparagine 279. Valine 328, aspartate 330, and phenylalanine 333 together coordinate K(+). ATP contacts are provided by threonine 334 and threonine 335. Phosphoserine is present on residues serine 356 and serine 360. Residues histidine 364, glycine 367, and leucine 370 each contribute to the ATP site. Glycine 367 is a binding site for K(+).

Belongs to the PDK/BCKDK protein kinase family. Homodimer. Homotetramer. Dimerizes through interaction of two opposing nucleotide-binding domains. Interacts with E2 component of the branched-chain alpha-ketoacid dehydrogenase (BCKDH) complex. Competes with BCKDK for binding to the E2 component; this interaction is modulated by branched-chain alpha-keto acids. At steady state, BCKDH holoenzyme contains BCKDK and BCKDHA is phosphorylated. In response to high levels of branched-chain alpha-keto acids, the inhibitory BCKDK is replaced by activating PPM1K leading to BCKDHA dephosphorylation and BCAA degradation. Post-translationally, autophosphorylated. As to expression, ubiquitous.

The protein localises to the mitochondrion matrix. It is found in the mitochondrion. The catalysed reaction is L-seryl-[3-methyl-2-oxobutanoate dehydrogenase] + ATP = O-phospho-L-seryl-[3-methyl-2-oxobutanoate dehydrogenase] + ADP + H(+). The enzyme catalyses L-seryl-[protein] + ATP = O-phospho-L-seryl-[protein] + ADP + H(+). Functionally, serine/threonine-protein kinase component of macronutrients metabolism. Forms a functional kinase and phosphatase pair with PPM1K, serving as a metabolic regulatory node that coordinates branched-chain amino acids (BCAAs) with glucose and lipid metabolism via two distinct phosphoprotein targets: mitochondrial BCKDHA subunit of the branched-chain alpha-ketoacid dehydrogenase (BCKDH) complex and cytosolic ACLY, a lipogenic enzyme of Krebs cycle. Phosphorylates and inactivates mitochondrial BCKDH complex a multisubunit complex consisting of three multimeric components each involved in different steps of BCAA catabolism: E1 composed of BCKDHA and BCKDHB, E2 core composed of DBT monomers, and E3 composed of DLD monomers. Associates with the E2 component of BCKDH complex and phosphorylates BCKDHA on Ser-334, leading to conformational changes that interrupt substrate channeling between E1 and E2 and inactivates the BCKDH complex. Phosphorylates ACLY on Ser-455 in response to changes in cellular carbohydrate abundance such as occurs during fasting to feeding metabolic transition. Refeeding stimulates MLXIPL/ChREBP transcription factor, leading to increased BCKDK to PPM1K expression ratio, phosphorylation and activation of ACLY that ultimately results in the generation of malonyl-CoA and oxaloacetate immediate substrates of de novo lipogenesis and glucogenesis, respectively. Recognizes phosphosites having SxxE/D canonical motif. The chain is Branched-chain alpha-ketoacid dehydrogenase kinase (Bckdk) from Mus musculus (Mouse).